Reading from the N-terminus, the 392-residue chain is Isocitrate dehydrogenase [NAD] subunit gamma, mitochondrial (392 aa).

A mitochondrion-targeting transit peptide spans 1-39; sequence MALKVATAAGGAVKAALRPALLWRPWEVLGSHEAPRRSF. Positions 119 and 132 each coordinate citrate. Positions 135, 166, and 253 each coordinate substrate. D253 contacts Mn(2+). Positions 311, 312, and 323 each coordinate ADP.

It belongs to the isocitrate and isopropylmalate dehydrogenases family. Heterooligomer of subunits alpha (IDH3A), beta (IDH3B), and gamma (IDH3G) in the apparent ratio of 2:1:1. The heterodimer containing one IDH3A and one IDH3B subunit and the heterodimer containing one IDH3A and one IDH3G subunit assemble into a heterotetramer (which contains two subunits of IDH3A, one of IDH3B and one of IDH3G) and further into the heterooctamer. It depends on Mg(2+) as a cofactor. Mn(2+) is required as a cofactor.

Its subcellular location is the mitochondrion. With respect to regulation, the heterotetramer and the heterodimer composed of IDH3A and IDH3G subunits can be allosterically activated by citrate (CIT) or/and ADP, and the two activators can act independently or synergistically. The heterodimer composed of IDH3A and IDH3B subunits cannot be allosterically regulated and the allosteric regulation of the heterotetramer is through the IDH3G subunit and not the IDH3B subunit. The IDH3G subunit contains the allosteric site which consists of a CIT-binding site and an ADP-binding site, and the binding of CIT and ADP causes conformational changes at the allosteric site which are transmitted to the active site in the catalytic subunit (IDH3A) through a cascade of conformational changes at the heterodimer interface, leading to stabilization of the isocitrate-binding at the active site and thus activation of the enzyme. ATP can activate the heterotetramer and the heterodimer composed of IDH3A and IDH3G subunits at low concentrations but inhibits their activities at high concentrations, whereas ATP exhibits only inhibitory effect on the heterodimer composed of IDH3A and IDH3B subunits. Its function is as follows. Regulatory subunit which plays a role in the allosteric regulation of the enzyme catalyzing the decarboxylation of isocitrate (ICT) into alpha-ketoglutarate. The heterodimer composed of the alpha (IDH3A) and beta (IDH3B) subunits and the heterodimer composed of the alpha (IDH3A) and gamma (IDH3G) subunits, have considerable basal activity but the full activity of the heterotetramer (containing two subunits of IDH3A, one of IDH3B and one of IDH3G) requires the assembly and cooperative function of both heterodimers. The protein is Isocitrate dehydrogenase [NAD] subunit gamma, mitochondrial (IDH3G) of Bos taurus (Bovine).